Here is a 101-residue protein sequence, read N- to C-terminus: UPF0235 protein MmarC6_1603 (101 aa).

It belongs to the UPF0235 family.

This chain is UPF0235 protein MmarC6_1603, found in Methanococcus maripaludis (strain C6 / ATCC BAA-1332).